A 136-amino-acid chain; its full sequence is Diuretic hormone 41 (136 aa).

A signal peptide spans Met-1–Ser-26. Residues Ile-27–Val-76 constitute a propeptide that is removed on maturation. Ile-119 bears the Isoleucine amide mark. Residues Gly-123–Tyr-136 constitute a propeptide that is removed on maturation.

It belongs to the sauvagine/corticotropin-releasing factor/urotensin I family.

Its subcellular location is the secreted. Regulation of fluid secretion. This Bombyx mori (Silk moth) protein is Diuretic hormone 41 (dh41).